A 151-amino-acid polypeptide reads, in one-letter code: Nascent polypeptide-associated complex subunit beta (151 aa).

The NAC-A/B domain occupies 32 to 97 (EQDDTKLMEA…PQEKDVTQLI (66 aa)). The interval 122–151 (GKTPSMGGENAGADEDIPDLIEGQKFDEVE) is disordered.

This sequence belongs to the NAC-beta family. In terms of assembly, part of the nascent polypeptide-associated complex (NAC), consisting of EGD2 and EGD1. NAC associates with ribosomes via EGD1.

The protein resides in the cytoplasm. It is found in the nucleus. Its function is as follows. Component of the nascent polypeptide-associated complex (NAC), a dynamic component of the ribosomal exit tunnel, protecting the emerging polypeptides from interaction with other cytoplasmic proteins to ensure appropriate nascent protein targeting. The NAC complex also promotes mitochondrial protein import by enhancing productive ribosome interactions with the outer mitochondrial membrane and blocks the inappropriate interaction of ribosomes translating non-secretory nascent polypeptides with translocation sites in the membrane of the endoplasmic reticulum. EGD1 may act as a transcription factor that exert a negative effect on the expression of several genes that are transcribed by RNA polymerase II. This chain is Nascent polypeptide-associated complex subunit beta (EGD1), found in Meyerozyma guilliermondii (strain ATCC 6260 / CBS 566 / DSM 6381 / JCM 1539 / NBRC 10279 / NRRL Y-324) (Yeast).